A 275-amino-acid polypeptide reads, in one-letter code: Ribosome-recycling factor, chloroplastic (275 aa).

A chloroplast-targeting transit peptide spans 1–82 (MAASFSSTAP…SLQKRLVIRS (82 aa)). Residues 215 to 271 (KVALRNIRRDALKSYDKLEKEKKLSEDNVKDLSSDLQKLIDVYMKKIEELYKQKEKE) adopt a coiled-coil conformation.

Belongs to the RRF family.

The protein localises to the plastid. It is found in the chloroplast. Functionally, responsible for the release of ribosomes from messenger RNA at the termination of chloroplastic protein biosynthesis. The polypeptide is Ribosome-recycling factor, chloroplastic (RRF) (Arabidopsis thaliana (Mouse-ear cress)).